We begin with the raw amino-acid sequence, 424 residues long: Histidinol dehydrogenase homolog (424 aa).

The Zn(2+) site is built by Q250 and H253. Residues E318 and H319 each act as proton acceptor in the active site. Zn(2+) is bound by residues D352 and H411.

The protein belongs to the histidinol dehydrogenase family. Zn(2+) serves as cofactor.

This Shouchella clausii (strain KSM-K16) (Alkalihalobacillus clausii) protein is Histidinol dehydrogenase homolog.